Here is a 208-residue protein sequence, read N- to C-terminus: Putative 3-methyladenine DNA glycosylase (208 aa).

The protein belongs to the DNA glycosylase MPG family.

The polypeptide is Putative 3-methyladenine DNA glycosylase (Lactobacillus delbrueckii subsp. bulgaricus (strain ATCC 11842 / DSM 20081 / BCRC 10696 / JCM 1002 / NBRC 13953 / NCIMB 11778 / NCTC 12712 / WDCM 00102 / Lb 14)).